The sequence spans 251 residues: Indole-3-glycerol phosphate synthase (251 aa).

Polar residues predominate over residues 1 to 12 (MDDSSSLASPVQ). The tract at residues 1-27 (MDDSSSLASPVQSILAAARRRDPPTRR) is disordered.

This sequence belongs to the TrpC family.

It carries out the reaction 1-(2-carboxyphenylamino)-1-deoxy-D-ribulose 5-phosphate + H(+) = (1S,2R)-1-C-(indol-3-yl)glycerol 3-phosphate + CO2 + H2O. The protein operates within amino-acid biosynthesis; L-tryptophan biosynthesis; L-tryptophan from chorismate: step 4/5. The sequence is that of Indole-3-glycerol phosphate synthase from Halobacterium salinarum (strain ATCC 700922 / JCM 11081 / NRC-1) (Halobacterium halobium).